A 65-amino-acid polypeptide reads, in one-letter code: Alpha-toxin Bot11 (65 aa).

An LCN-type CS-alpha/beta domain is found at 2 to 64 (KDGYIVDDRN…VRTVQAGRCR (63 aa)). Intrachain disulfides connect Cys12/Cys63, Cys16/Cys36, Cys22/Cys46, and Cys26/Cys48.

It belongs to the long (4 C-C) scorpion toxin superfamily. Sodium channel inhibitor family. Alpha subfamily. As to expression, expressed by the venom gland.

Its subcellular location is the secreted. Functionally, alpha toxins bind voltage-independently at site-3 of sodium channels (Nav) and inhibit the inactivation of the activated channels, thereby blocking neuronal transmission. This chain is Alpha-toxin Bot11, found in Buthus occitanus tunetanus (Common European scorpion).